A 302-amino-acid polypeptide reads, in one-letter code: Sulfate adenylyltransferase subunit 2 (302 aa).

Positions 280-302 are disordered; that stretch reads RQGRVIDHDSSGSMEKKKREGYF.

Belongs to the PAPS reductase family. CysD subfamily. As to quaternary structure, heterodimer composed of CysD, the smaller subunit, and CysN.

The catalysed reaction is sulfate + ATP + H(+) = adenosine 5'-phosphosulfate + diphosphate. It functions in the pathway sulfur metabolism; hydrogen sulfide biosynthesis; sulfite from sulfate: step 1/3. With CysN forms the ATP sulfurylase (ATPS) that catalyzes the adenylation of sulfate producing adenosine 5'-phosphosulfate (APS) and diphosphate, the first enzymatic step in sulfur assimilation pathway. APS synthesis involves the formation of a high-energy phosphoric-sulfuric acid anhydride bond driven by GTP hydrolysis by CysN coupled to ATP hydrolysis by CysD. The sequence is that of Sulfate adenylyltransferase subunit 2 from Shewanella amazonensis (strain ATCC BAA-1098 / SB2B).